Consider the following 351-residue polypeptide: MAPMGIRLSPLGIGVFCLLALGVLYHVYSGFLTGRFAAFLLGDRAGDTVDLRELLAVSVRAAELGGVEVKKVRESNSLNEKAKGKTREGEDEKMTSGDVLSNKKMYHLIKNAFPAVLVNTEEQVDPDEEDAVSWDHDIPDEIKDKIKTSKPVSSESITIWIDPLDATHEYAENLVKYVTTMVCVAVNGKPVIGVIHKPFTGYTAWAMVDEGANIKKRSSYNEKTPTFIVSRSHSGEVKEVTRQTFGNKTEIISAGGAGYKVLSLLDVTADEQEKADVYIHVTYIKKWDICAGNAILNALGGHMTTLKGEEISYTGSEQNEGGLLASIGMDHSALVGKLAEKISVNAKKPAK.

The chain crosses the membrane as a helical span at residues Leu-11–Phe-31. 5 residues coordinate Mg(2+): Glu-121, Asp-162, Leu-164, Asp-165, and Asp-288. Substrate is bound at residue Glu-121. Substrate is bound by residues Leu-164–Thr-167 and Asp-288.

This sequence belongs to the inositol monophosphatase superfamily. Mg(2+) is required as a cofactor.

It is found in the membrane. The enzyme catalyses a myo-inositol phosphate + H2O = myo-inositol + phosphate. The protein operates within polyol metabolism; myo-inositol biosynthesis; myo-inositol from D-glucose 6-phosphate: step 2/2. The polypeptide is Inositol monophosphatase 3 (bpnt2) (Xenopus laevis (African clawed frog)).